Here is a 174-residue protein sequence, read N- to C-terminus: Co-chaperone protein HscB (174 aa).

Positions 2–74 (NYFALFDLPR…LNRAIYFLCL (73 aa)) constitute a J domain.

The protein belongs to the HscB family. As to quaternary structure, interacts with HscA and stimulates its ATPase activity. Interacts with IscU.

Co-chaperone involved in the maturation of iron-sulfur cluster-containing proteins. Seems to help targeting proteins to be folded toward HscA. This is Co-chaperone protein HscB from Buchnera aphidicola subsp. Acyrthosiphon pisum (strain 5A).